A 112-amino-acid chain; its full sequence is UPF0342 protein SPH_1504 (112 aa).

The protein belongs to the UPF0342 family.

The chain is UPF0342 protein SPH_1504 from Streptococcus pneumoniae (strain Hungary19A-6).